Consider the following 196-residue polypeptide: dITP/XTP pyrophosphatase (196 aa).

Residue 7-12 (THNPGK) coordinates substrate. Mg(2+) is bound by residues Asp40 and Asp69. Asp69 (proton acceptor) is an active-site residue. Residues Ser70, 150–153 (FGYD), Lys173, and 178–179 (HR) each bind substrate.

It belongs to the HAM1 NTPase family. Homodimer. Requires Mg(2+) as cofactor.

It catalyses the reaction XTP + H2O = XMP + diphosphate + H(+). The catalysed reaction is dITP + H2O = dIMP + diphosphate + H(+). The enzyme catalyses ITP + H2O = IMP + diphosphate + H(+). Its function is as follows. Pyrophosphatase that catalyzes the hydrolysis of nucleoside triphosphates to their monophosphate derivatives, with a high preference for the non-canonical purine nucleotides XTP (xanthosine triphosphate), dITP (deoxyinosine triphosphate) and ITP. Seems to function as a house-cleaning enzyme that removes non-canonical purine nucleotides from the nucleotide pool, thus preventing their incorporation into DNA/RNA and avoiding chromosomal lesions. This is dITP/XTP pyrophosphatase from Exiguobacterium sp. (strain ATCC BAA-1283 / AT1b).